The chain runs to 237 residues: Large ribosomal subunit protein uL2 (237 aa).

Over residues 1-11 the composition is skewed to polar residues; the sequence is MGKRLISQNRG. 2 disordered regions span residues 1-26 and 204-237; these read MGKR…KRKG and PYGG…SRRT. 2 stretches are compositionally biased toward basic residues: residues 13–26 and 228–237; these read GTPK…KRKG and KVGHIASRRT.

It belongs to the universal ribosomal protein uL2 family. Part of the 50S ribosomal subunit. Forms a bridge to the 30S subunit in the 70S ribosome.

Functionally, one of the primary rRNA binding proteins. Required for association of the 30S and 50S subunits to form the 70S ribosome, for tRNA binding and peptide bond formation. It has been suggested to have peptidyltransferase activity; this is somewhat controversial. Makes several contacts with the 16S rRNA in the 70S ribosome. This chain is Large ribosomal subunit protein uL2, found in Methanococcus vannielii.